A 768-amino-acid polypeptide reads, in one-letter code: Lon protease (768 aa).

The 195-residue stretch at 4-198 (APFLPIRDLV…RILDEIVAEM (195 aa)) folds into the Lon N-terminal domain. Residue 349–356 (GPPGIGKT) participates in ATP binding. The Lon proteolytic domain maps to 586 to 768 (TGKIGVVNGL…DDVSKLVFVK (183 aa)). Catalysis depends on residues S674 and K717.

The protein belongs to the peptidase S16 family. Homohexamer. Organized in a ring with a central cavity.

Its subcellular location is the cytoplasm. The enzyme catalyses Hydrolysis of proteins in presence of ATP.. Functionally, ATP-dependent serine protease that mediates the selective degradation of mutant and abnormal proteins as well as certain short-lived regulatory proteins. Required for cellular homeostasis and for survival from DNA damage and developmental changes induced by stress. Degrades polypeptides processively to yield small peptide fragments that are 5 to 10 amino acids long. Binds to DNA in a double-stranded, site-specific manner. This Fusobacterium nucleatum subsp. nucleatum (strain ATCC 25586 / DSM 15643 / BCRC 10681 / CIP 101130 / JCM 8532 / KCTC 2640 / LMG 13131 / VPI 4355) protein is Lon protease.